The chain runs to 302 residues: Glycine--tRNA ligase alpha subunit (302 aa).

The protein belongs to the class-II aminoacyl-tRNA synthetase family. Tetramer of two alpha and two beta subunits.

It is found in the cytoplasm. The enzyme catalyses tRNA(Gly) + glycine + ATP = glycyl-tRNA(Gly) + AMP + diphosphate. The sequence is that of Glycine--tRNA ligase alpha subunit from Haemophilus ducreyi (strain 35000HP / ATCC 700724).